The primary structure comprises 231 residues: Cytochrome c oxidase subunit 2 (231 aa).

Topologically, residues 1–14 are mitochondrial intermembrane; the sequence is MAHPAQLGLQNATS. A helical membrane pass occupies residues 15–45; sequence PIMEELIAFHDHALMIIFLISSLVLYIISLM. Residues 46 to 59 are Mitochondrial matrix-facing; that stretch reads LTTKLTHTSTMNAQ. A helical transmembrane segment spans residues 60-87; the sequence is EIEMVWTILPAIILIMIALPSLRILYMT. Over 88 to 231 the chain is Mitochondrial intermembrane; that stretch reads DEFNKPYLTL…WASYLYIVSL (144 aa). 6 residues coordinate Cu cation: histidine 161, cysteine 196, glutamate 198, cysteine 200, histidine 204, and methionine 207. Glutamate 198 serves as a coordination point for Mg(2+).

Belongs to the cytochrome c oxidase subunit 2 family. Component of the cytochrome c oxidase (complex IV, CIV), a multisubunit enzyme composed of 14 subunits. The complex is composed of a catalytic core of 3 subunits MT-CO1, MT-CO2 and MT-CO3, encoded in the mitochondrial DNA, and 11 supernumerary subunits COX4I, COX5A, COX5B, COX6A, COX6B, COX6C, COX7A, COX7B, COX7C, COX8 and NDUFA4, which are encoded in the nuclear genome. The complex exists as a monomer or a dimer and forms supercomplexes (SCs) in the inner mitochondrial membrane with NADH-ubiquinone oxidoreductase (complex I, CI) and ubiquinol-cytochrome c oxidoreductase (cytochrome b-c1 complex, complex III, CIII), resulting in different assemblies (supercomplex SCI(1)III(2)IV(1) and megacomplex MCI(2)III(2)IV(2)). Found in a complex with TMEM177, COA6, COX18, COX20, SCO1 and SCO2. Interacts with TMEM177 in a COX20-dependent manner. Interacts with COX20. Interacts with COX16. The cofactor is Cu cation.

It is found in the mitochondrion inner membrane. The enzyme catalyses 4 Fe(II)-[cytochrome c] + O2 + 8 H(+)(in) = 4 Fe(III)-[cytochrome c] + 2 H2O + 4 H(+)(out). Its function is as follows. Component of the cytochrome c oxidase, the last enzyme in the mitochondrial electron transport chain which drives oxidative phosphorylation. The respiratory chain contains 3 multisubunit complexes succinate dehydrogenase (complex II, CII), ubiquinol-cytochrome c oxidoreductase (cytochrome b-c1 complex, complex III, CIII) and cytochrome c oxidase (complex IV, CIV), that cooperate to transfer electrons derived from NADH and succinate to molecular oxygen, creating an electrochemical gradient over the inner membrane that drives transmembrane transport and the ATP synthase. Cytochrome c oxidase is the component of the respiratory chain that catalyzes the reduction of oxygen to water. Electrons originating from reduced cytochrome c in the intermembrane space (IMS) are transferred via the dinuclear copper A center (CU(A)) of subunit 2 and heme A of subunit 1 to the active site in subunit 1, a binuclear center (BNC) formed by heme A3 and copper B (CU(B)). The BNC reduces molecular oxygen to 2 water molecules using 4 electrons from cytochrome c in the IMS and 4 protons from the mitochondrial matrix. This is Cytochrome c oxidase subunit 2 (MT-CO2) from Lagothrix lagotricha (Brown woolly monkey).